Consider the following 138-residue polypeptide: Ribosome-binding factor A (138 aa).

It belongs to the RbfA family. As to quaternary structure, monomer. Binds 30S ribosomal subunits, but not 50S ribosomal subunits or 70S ribosomes.

The protein resides in the cytoplasm. In terms of biological role, one of several proteins that assist in the late maturation steps of the functional core of the 30S ribosomal subunit. Associates with free 30S ribosomal subunits (but not with 30S subunits that are part of 70S ribosomes or polysomes). Required for efficient processing of 16S rRNA. May interact with the 5'-terminal helix region of 16S rRNA. The protein is Ribosome-binding factor A of Bradyrhizobium sp. (strain ORS 278).